The chain runs to 135 residues: C-type Lectin CRL (135 aa).

Intrachain disulfides connect C3/C14, C31/C131, C38/C133, and C106/C123. A C-type lectin domain is found at 10 to 132 (MNGLCYKIFN…CESKDAFLCQ (123 aa)). Q96, D98, E104, N119, and D120 together coordinate Ca(2+). A Galactose-binding motif is present at residues 96–98 (QPD).

Belongs to the true venom lectin family. Homodimer; disulfide-linked. Expressed by the venom gland.

It localises to the secreted. Functionally, beta-galactoside and N-acetylgalactosamine (GalNAc) specific C-type lectin. The protein is C-type Lectin CRL of Crotalus ruber ruber (Red diamond rattlesnake).